The primary structure comprises 224 residues: Thiamine-phosphate synthase (224 aa).

Residues 43–47 (QYRPK) and Asn75 contribute to the 4-amino-2-methyl-5-(diphosphooxymethyl)pyrimidine site. Mg(2+) is bound by residues Asp76 and Asp95. Residue Ser114 participates in 4-amino-2-methyl-5-(diphosphooxymethyl)pyrimidine binding. 141–143 (SAT) serves as a coordination point for 2-[(2R,5Z)-2-carboxy-4-methylthiazol-5(2H)-ylidene]ethyl phosphate. Lys144 provides a ligand contact to 4-amino-2-methyl-5-(diphosphooxymethyl)pyrimidine. Gly171 is a 2-[(2R,5Z)-2-carboxy-4-methylthiazol-5(2H)-ylidene]ethyl phosphate binding site.

The protein belongs to the thiamine-phosphate synthase family. It depends on Mg(2+) as a cofactor.

It carries out the reaction 2-[(2R,5Z)-2-carboxy-4-methylthiazol-5(2H)-ylidene]ethyl phosphate + 4-amino-2-methyl-5-(diphosphooxymethyl)pyrimidine + 2 H(+) = thiamine phosphate + CO2 + diphosphate. The enzyme catalyses 2-(2-carboxy-4-methylthiazol-5-yl)ethyl phosphate + 4-amino-2-methyl-5-(diphosphooxymethyl)pyrimidine + 2 H(+) = thiamine phosphate + CO2 + diphosphate. The catalysed reaction is 4-methyl-5-(2-phosphooxyethyl)-thiazole + 4-amino-2-methyl-5-(diphosphooxymethyl)pyrimidine + H(+) = thiamine phosphate + diphosphate. It participates in cofactor biosynthesis; thiamine diphosphate biosynthesis; thiamine phosphate from 4-amino-2-methyl-5-diphosphomethylpyrimidine and 4-methyl-5-(2-phosphoethyl)-thiazole: step 1/1. Condenses 4-methyl-5-(beta-hydroxyethyl)thiazole monophosphate (THZ-P) and 2-methyl-4-amino-5-hydroxymethyl pyrimidine pyrophosphate (HMP-PP) to form thiamine monophosphate (TMP). This chain is Thiamine-phosphate synthase, found in Methylococcus capsulatus (strain ATCC 33009 / NCIMB 11132 / Bath).